The chain runs to 1678 residues: Nuclear pore complex protein Nup98-Nup96 (1678 aa).

The segment covering 1–11 (MFGQNKSFGSS) has biased composition (low complexity). 5 disordered regions span residues 1–41 (MFGQ…QPAN), 68–100 (SSIF…FGST), 301–366 (TTGS…GAPA), 441–473 (FGNT…TQAT), and 603–631 (SKEA…RSVH). Positions 12–22 (SFGGGSSGSGL) are enriched in gly residues. Low complexity-rich tracts occupy residues 23–38 (FGQN…LFGQ) and 73–83 (SPQQPQNNQSS). Positions 306–329 (LFGNQQPQTNTGGSLFGNTQNQNQ) are enriched in polar residues. A compositionally biased stretch (low complexity) spans 345–366 (FGQAQQQPQQQSSGFSFGGAPA). 2 stretches are compositionally biased toward polar residues: residues 456-473 (SQPQ…TQAT) and 615-628 (RNST…LTNR). One can recognise a Peptidase S59 domain in the interval 777–919 (KPDYFSLPTI…GSWVFRVDHF (143 aa)). The Nucleophile role is filled by Ser-920.

This sequence belongs to the nucleoporin GLFG family. In terms of assembly, part of the NPC. The Nup98 and Nup96 chains are autoproteolytically processed from a single precursor protein.

The protein localises to the cytoplasmic granule. Its subcellular location is the nucleus membrane. It is found in the nucleus. The protein resides in the nuclear pore complex. It localises to the nucleus envelope. The protein localises to the chromosome. Functionally, nup98 and Nup96 play a role in the bidirectional transport across the nucleoporin complex (NPC). Required for the nuclear import of hcp-4 during mitotic prophase, this step is essential for centrosome assembly and resolution. Regulates nucleoporin npp-5 localization to the nuclear membrane during interphase and to kinetochores during metaphase. Has a role in P granule integrity; may promote the 'liquid phase' of P granules by increasing the number of interacting RNA-protein complexes. Binds nos-2 mRNA, probably indirectly, and promotes its accumulation in P granules. The protein is Nuclear pore complex protein Nup98-Nup96 of Caenorhabditis elegans.